The sequence spans 86 residues: Cytochrome c oxidase subunit 12, mitochondrial (86 aa).

The CHCH domain occupies 30–73 (TKHCFQSYIDYFRCIKAKGEDFVPCKQFWHAYQSLCPMEWVERW). A Cx9C motif motif is present at residues 33–43 (CFQSYIDYFRC). Intrachain disulfides connect C33-C65 and C43-C54. Residues 54–65 (CKQFWHAYQSLC) carry the Cx10C motif motif.

The protein belongs to the cytochrome c oxidase subunit 6B family. Component of the cytochrome c oxidase (complex IV, CIV), a multisubunit enzyme composed of a catalytic core of 3 subunits and several supernumerary subunits. The complex exists as a monomer or a dimer and forms supercomplexes (SCs) in the inner mitochondrial membrane with ubiquinol-cytochrome c oxidoreductase (cytochrome b-c1 complex, complex III, CIII).

Its subcellular location is the mitochondrion inner membrane. Its pathway is energy metabolism; oxidative phosphorylation. Its function is as follows. Component of the cytochrome c oxidase, the last enzyme in the mitochondrial electron transport chain which drives oxidative phosphorylation. The respiratory chain contains 3 multisubunit complexes succinate dehydrogenase (complex II, CII), ubiquinol-cytochrome c oxidoreductase (cytochrome b-c1 complex, complex III, CIII) and cytochrome c oxidase (complex IV, CIV), that cooperate to transfer electrons derived from NADH and succinate to molecular oxygen, creating an electrochemical gradient over the inner membrane that drives transmembrane transport and the ATP synthase. Cytochrome c oxidase is the component of the respiratory chain that catalyzes the reduction of oxygen to water. Electrons originating from reduced cytochrome c in the intermembrane space (IMS) are transferred via the dinuclear copper A center (CU(A)) of subunit 2 and heme A of subunit 1 to the active site in subunit 1, a binuclear center (BNC) formed by heme A3 and copper B (CU(B)). The BNC reduces molecular oxygen to 2 water molecules using 4 electrons from cytochrome c in the IMS and 4 protons from the mitochondrial matrix. This chain is Cytochrome c oxidase subunit 12, mitochondrial (cox12), found in Schizosaccharomyces pombe (strain 972 / ATCC 24843) (Fission yeast).